The following is a 150-amino-acid chain: D-aminoacyl-tRNA deacylase (150 aa).

The Gly-cisPro motif, important for rejection of L-amino acids motif lies at 137-138 (GP).

Belongs to the DTD family. As to quaternary structure, homodimer.

Its subcellular location is the cytoplasm. It catalyses the reaction glycyl-tRNA(Ala) + H2O = tRNA(Ala) + glycine + H(+). The enzyme catalyses a D-aminoacyl-tRNA + H2O = a tRNA + a D-alpha-amino acid + H(+). Functionally, an aminoacyl-tRNA editing enzyme that deacylates mischarged D-aminoacyl-tRNAs. Also deacylates mischarged glycyl-tRNA(Ala), protecting cells against glycine mischarging by AlaRS. Acts via tRNA-based rather than protein-based catalysis; rejects L-amino acids rather than detecting D-amino acids in the active site. By recycling D-aminoacyl-tRNA to D-amino acids and free tRNA molecules, this enzyme counteracts the toxicity associated with the formation of D-aminoacyl-tRNA entities in vivo and helps enforce protein L-homochirality. The polypeptide is D-aminoacyl-tRNA deacylase (Geotalea daltonii (strain DSM 22248 / JCM 15807 / FRC-32) (Geobacter daltonii)).